Reading from the N-terminus, the 245-residue chain is DNA polymerase sliding clamp (245 aa).

The protein belongs to the PCNA family. In terms of assembly, homotrimer. The subunits circularize to form a toroid; DNA passes through its center. Replication factor C (RFC) is required to load the toroid on the DNA.

Functionally, sliding clamp subunit that acts as a moving platform for DNA processing. Responsible for tethering the catalytic subunit of DNA polymerase and other proteins to DNA during high-speed replication. This is DNA polymerase sliding clamp from Methanosarcina mazei (strain ATCC BAA-159 / DSM 3647 / Goe1 / Go1 / JCM 11833 / OCM 88) (Methanosarcina frisia).